The chain runs to 73 residues: Large ribosomal subunit protein bL31 (73 aa).

Belongs to the bacterial ribosomal protein bL31 family. Type A subfamily. Part of the 50S ribosomal subunit.

Its function is as follows. Binds the 23S rRNA. This Rhizobium meliloti (strain 1021) (Ensifer meliloti) protein is Large ribosomal subunit protein bL31.